The primary structure comprises 662 residues: Sodium/glucose cotransporter 1 (662 aa).

The Extracellular portion of the chain corresponds to 1–24; it reads MDSSTLSPLTTSTAAPLESYERIR. The helical transmembrane segment at 25–47 threads the bilayer; it reads NAADISVIVIYFLVVMAVGLWAM. The Cytoplasmic segment spans residues 48 to 66; that stretch reads FSTNRGTVGGFFLAGRSMV. Residues 67–90 traverse the membrane as a helical segment; it reads WWPIGASLFASNIGSGHFVGLAGT. The Extracellular portion of the chain corresponds to 91 to 95; it reads GAASG. Residues 96–117 form a helical membrane-spanning segment; that stretch reads IATGGFEWNALIMVVVLGWVFV. Topologically, residues 118–139 are cytoplasmic; it reads PIYIRAGVVTMPEYLQKRFGGK. A helical membrane pass occupies residues 140 to 169; it reads RIQIYLSILSLLLYIFTKISADIFSGAIFI. Over 170–176 the chain is Extracellular; the sequence is QLTLGLD. Residues 177–193 form a helical membrane-spanning segment; the sequence is IYVAIIILLVITGLYTI. Over 194–202 the chain is Cytoplasmic; sequence TGGLAAVIY. A helical transmembrane segment spans residues 203–221; the sequence is TDTLQTAIMMVGSVILTGF. Residues 222–275 lie on the Extracellular side of the membrane; sequence AFHEVGGYEAFTEKYMRAIPSQISYGNTSIPQKCYTPREDAFHIFRDAITGDIP. Asparagine 248 carries N-linked (GlcNAc...) asparagine glycosylation. 5 cysteine pairs are disulfide-bonded: cysteine 255-cysteine 511, cysteine 255-cysteine 608, cysteine 345-cysteine 351, cysteine 355-cysteine 361, and cysteine 517-cysteine 522. Residues 276 to 295 traverse the membrane as a helical segment; sequence WPGLVFGMSILTLWYWCTDQ. The Cytoplasmic segment spans residues 296–309; the sequence is VIVQRCLSAKNLSH. Residues 310–331 form a helical membrane-spanning segment; sequence VKAGCILCGYLKVMPMFLIVMM. The Extracellular segment spans residues 332–375; sequence GMVSRILYTDKVACVVPSECERYCGTRVGCTNIAFPTLVVELMP. Residues 376-406 traverse the membrane as a helical segment; it reads NGLRGLMLSVMMASLMSSLTSIFNSASTLFT. Residues 407–422 lie on the Cytoplasmic side of the membrane; sequence MDIYTKIRKKASEKEL. The chain crosses the membrane as a helical span at residues 423–444; that stretch reads MIAGRLFMLFLIGISIAWVPIV. The Extracellular segment spans residues 445–451; it reads QSAQSGQ. The helical transmembrane segment at 452-477 threads the bilayer; it reads LFDYIQSITSYLGPPIAAVFLLAIFW. Glutamine 457 is a binding site for D-glucose. Residues 478-481 are Cytoplasmic-facing; the sequence is KRVN. Residues 482–504 form a helical membrane-spanning segment; sequence EPGAFWGLVLGFLIGISRMITEF. The Extracellular segment spans residues 505–525; sequence AYGTGSCMEPSNCPTIICGVH. A helical membrane pass occupies residues 526 to 547; sequence YLYFAIILFVISIITVVVVSLF. The Cytoplasmic portion of the chain corresponds to 548–642; that stretch reads TKPIPDVHLY…TSEHPLWRTV (95 aa). Residues 643–660 form a helical membrane-spanning segment; that stretch reads VNINGVILLAVAVFCYAY. At 661-662 the chain is on the extracellular side; the sequence is FA.

It belongs to the sodium:solute symporter (SSF) (TC 2.A.21) family. Post-translationally, N-glycosylation is not necessary for the cotransporter function. In terms of tissue distribution, found predominantly in intestine, renal cortex and in outer renal medulla.

The protein localises to the apical cell membrane. It catalyses the reaction D-glucose(out) + 2 Na(+)(out) = D-glucose(in) + 2 Na(+)(in). The enzyme catalyses D-galactose(out) + 2 Na(+)(out) = D-galactose(in) + 2 Na(+)(in). With respect to regulation, enhanced by the interaction with PDZK1IP1/MAP17; but unlike SLC5A2/SGLT2, PDZK1IP1 is not essential for SLC5A1 transporter activity. Possibly modulated by cholesterol binding. Its function is as follows. Electrogenic Na(+)-coupled sugar symporter that actively transports D-glucose or D-galactose at the plasma membrane, with a Na(+) to sugar coupling ratio of 2:1. Transporter activity is driven by a transmembrane Na(+) electrochemical gradient set by the Na(+)/K(+) pump. Has a primary role in the transport of dietary monosaccharides from enterocytes to blood. Responsible for the absorption of D-glucose or D-galactose across the apical brush-border membrane of enterocytes, whereas basolateral exit is provided by GLUT2. Additionally, functions as a D-glucose sensor in enteroendocrine cells, triggering the secretion of the incretins GCG and GIP that control food intake and energy homeostasis. Together with SGLT2, functions in reabsorption of D-glucose from glomerular filtrate, playing a nonredundant role in the S3 segment of the proximal tubules. Transports D-glucose into endometrial epithelial cells, controlling glycogen synthesis and nutritional support for the embryo as well as the decidual transformation of endometrium prior to conception. Acts as a water channel enabling passive water transport in response to the osmotic gradient created upon sugar and Na(+) uptake. Has high water conductivity comparable to aquaporins and therefore is expected to play an important role in transepithelial water permeability, especially in the small intestine. In Oryctolagus cuniculus (Rabbit), this protein is Sodium/glucose cotransporter 1 (SLC5A1).